The sequence spans 333 residues: Ketol-acid reductoisomerase (NADP(+)) (333 aa).

The region spanning 2–182 (ANIYYDADCD…GGGRAGILET (181 aa)) is the KARI N-terminal Rossmann domain. Residues 25–28 (YGSQ), K48, S51, S53, and 83–86 (DTIQ) each bind NADP(+). H108 is a catalytic residue. Residue G134 coordinates NADP(+). The KARI C-terminal knotted domain maps to 183–331 (SFREETETDL…KKLRSMMKWL (149 aa)). Residues D191, E195, E227, and E231 each contribute to the Mg(2+) site. S252 contributes to the substrate binding site.

The protein belongs to the ketol-acid reductoisomerase family. Requires Mg(2+) as cofactor.

It carries out the reaction (2R)-2,3-dihydroxy-3-methylbutanoate + NADP(+) = (2S)-2-acetolactate + NADPH + H(+). The catalysed reaction is (2R,3R)-2,3-dihydroxy-3-methylpentanoate + NADP(+) = (S)-2-ethyl-2-hydroxy-3-oxobutanoate + NADPH + H(+). The protein operates within amino-acid biosynthesis; L-isoleucine biosynthesis; L-isoleucine from 2-oxobutanoate: step 2/4. Its pathway is amino-acid biosynthesis; L-valine biosynthesis; L-valine from pyruvate: step 2/4. In terms of biological role, involved in the biosynthesis of branched-chain amino acids (BCAA). Catalyzes an alkyl-migration followed by a ketol-acid reduction of (S)-2-acetolactate (S2AL) to yield (R)-2,3-dihydroxy-isovalerate. In the isomerase reaction, S2AL is rearranged via a Mg-dependent methyl migration to produce 3-hydroxy-3-methyl-2-ketobutyrate (HMKB). In the reductase reaction, this 2-ketoacid undergoes a metal-dependent reduction by NADPH to yield (R)-2,3-dihydroxy-isovalerate. This Leptospira borgpetersenii serovar Hardjo-bovis (strain JB197) protein is Ketol-acid reductoisomerase (NADP(+)).